A 254-amino-acid polypeptide reads, in one-letter code: Diphthine synthase (254 aa).

Residues Leu-11, Asp-87, Ile-90, 115 to 116 (SV), Leu-167, Leu-208, and His-233 each bind S-adenosyl-L-methionine.

Belongs to the diphthine synthase family. Homodimer.

It catalyses the reaction 2-[(3S)-amino-3-carboxypropyl]-L-histidyl-[translation elongation factor 2] + 3 S-adenosyl-L-methionine = diphthine-[translation elongation factor 2] + 3 S-adenosyl-L-homocysteine + 3 H(+). The protein operates within protein modification; peptidyl-diphthamide biosynthesis. In terms of biological role, S-adenosyl-L-methionine-dependent methyltransferase that catalyzes the trimethylation of the amino group of the modified target histidine residue in translation elongation factor 2 (EF-2), to form an intermediate called diphthine. The three successive methylation reactions represent the second step of diphthamide biosynthesis. In Metallosphaera sedula (strain ATCC 51363 / DSM 5348 / JCM 9185 / NBRC 15509 / TH2), this protein is Diphthine synthase.